The primary structure comprises 289 residues: Energy-coupling factor transporter ATP-binding protein EcfA2 (289 aa).

The ABC transporter domain maps to 3-246; sequence IEIKDVEHRY…KDDIAALGLD (244 aa). 40-47 is an ATP binding site; that stretch reads GHTGSGKS.

Belongs to the ABC transporter superfamily. Energy-coupling factor EcfA family. Forms a stable energy-coupling factor (ECF) transporter complex composed of 2 membrane-embedded substrate-binding proteins (S component), 2 ATP-binding proteins (A component) and 2 transmembrane proteins (T component).

The protein localises to the cell membrane. Functionally, ATP-binding (A) component of a common energy-coupling factor (ECF) ABC-transporter complex. Unlike classic ABC transporters this ECF transporter provides the energy necessary to transport a number of different substrates. The sequence is that of Energy-coupling factor transporter ATP-binding protein EcfA2 from Bacillus licheniformis (strain ATCC 14580 / DSM 13 / JCM 2505 / CCUG 7422 / NBRC 12200 / NCIMB 9375 / NCTC 10341 / NRRL NRS-1264 / Gibson 46).